The sequence spans 260 residues: DNA repair protein RecO (260 aa).

This sequence belongs to the RecO family.

Its function is as follows. Involved in DNA repair and RecF pathway recombination. This chain is DNA repair protein RecO, found in Levilactobacillus brevis (strain ATCC 367 / BCRC 12310 / CIP 105137 / JCM 1170 / LMG 11437 / NCIMB 947 / NCTC 947) (Lactobacillus brevis).